Here is a 380-residue protein sequence, read N- to C-terminus: DNA replication and repair protein RecF (380 aa).

An ATP-binding site is contributed by G30 to T37.

It belongs to the RecF family.

It localises to the cytoplasm. Functionally, the RecF protein is involved in DNA metabolism; it is required for DNA replication and normal SOS inducibility. RecF binds preferentially to single-stranded, linear DNA. It also seems to bind ATP. This Mycobacterium sp. (strain KMS) protein is DNA replication and repair protein RecF.